A 352-amino-acid polypeptide reads, in one-letter code: 3-dehydroquinate synthase (352 aa).

Residues 60 to 65, 118 to 119, lysine 131, lysine 140, and 158 to 161 each bind NAD(+); these read DGEGAK, TT, and FLET. Positions 173, 237, and 253 each coordinate Zn(2+).

It belongs to the sugar phosphate cyclases superfamily. Dehydroquinate synthase family. The cofactor is NAD(+). Co(2+) is required as a cofactor. Requires Zn(2+) as cofactor.

The protein resides in the cytoplasm. The catalysed reaction is 7-phospho-2-dehydro-3-deoxy-D-arabino-heptonate = 3-dehydroquinate + phosphate. It functions in the pathway metabolic intermediate biosynthesis; chorismate biosynthesis; chorismate from D-erythrose 4-phosphate and phosphoenolpyruvate: step 2/7. In terms of biological role, catalyzes the conversion of 3-deoxy-D-arabino-heptulosonate 7-phosphate (DAHP) to dehydroquinate (DHQ). The chain is 3-dehydroquinate synthase from Sulfurisphaera tokodaii (strain DSM 16993 / JCM 10545 / NBRC 100140 / 7) (Sulfolobus tokodaii).